A 231-amino-acid polypeptide reads, in one-letter code: Cytidylate kinase (231 aa).

Position 17-25 (17-25 (GPTASGKGT)) interacts with ATP.

The protein belongs to the cytidylate kinase family. Type 1 subfamily.

The protein localises to the cytoplasm. It carries out the reaction CMP + ATP = CDP + ADP. The catalysed reaction is dCMP + ATP = dCDP + ADP. The protein is Cytidylate kinase of Ralstonia pickettii (strain 12J).